The following is a 185-amino-acid chain: Large ribosomal subunit protein uL5 (185 aa).

It belongs to the universal ribosomal protein uL5 family. In terms of assembly, part of the 50S ribosomal subunit; part of the 5S rRNA/L5/L18/L25 subcomplex. Contacts the 5S rRNA and the P site tRNA. Forms a bridge to the 30S subunit in the 70S ribosome.

This is one of the proteins that bind and probably mediate the attachment of the 5S RNA into the large ribosomal subunit, where it forms part of the central protuberance. In the 70S ribosome it contacts protein S13 of the 30S subunit (bridge B1b), connecting the 2 subunits; this bridge is implicated in subunit movement. Contacts the P site tRNA; the 5S rRNA and some of its associated proteins might help stabilize positioning of ribosome-bound tRNAs. The protein is Large ribosomal subunit protein uL5 of Bradyrhizobium sp. (strain BTAi1 / ATCC BAA-1182).